The chain runs to 421 residues: NADH-quinone oxidoreductase subunit F 2 (421 aa).

An NAD(+)-binding site is contributed by 53–62; it reads GRGGAGFPTG. 165-212 provides a ligand contact to FMN; the sequence is GAGAYICGEETAMLESLEGKRAQPRLKPPFPAVAGLYASPTVINNVET. [4Fe-4S] cluster is bound by residues Cys-342, Cys-345, Cys-348, and Cys-388.

It belongs to the complex I 51 kDa subunit family. FMN serves as cofactor. Requires [4Fe-4S] cluster as cofactor.

The catalysed reaction is a quinone + NADH + 5 H(+)(in) = a quinol + NAD(+) + 4 H(+)(out). NDH-1 shuttles electrons from NADH, via FMN and iron-sulfur (Fe-S) centers, to quinones in the respiratory chain. The immediate electron acceptor for the enzyme in this species is believed to be ubiquinone. Couples the redox reaction to proton translocation (for every two electrons transferred, four hydrogen ions are translocated across the cytoplasmic membrane), and thus conserves the redox energy in a proton gradient. This Rhizobium meliloti (strain 1021) (Ensifer meliloti) protein is NADH-quinone oxidoreductase subunit F 2 (nuoF2).